Here is a 253-residue protein sequence, read N- to C-terminus: Cell division protein ZapD (253 aa).

The protein belongs to the ZapD family. As to quaternary structure, interacts with FtsZ.

The protein resides in the cytoplasm. Cell division factor that enhances FtsZ-ring assembly. Directly interacts with FtsZ and promotes bundling of FtsZ protofilaments, with a reduction in FtsZ GTPase activity. The chain is Cell division protein ZapD from Bordetella bronchiseptica (strain ATCC BAA-588 / NCTC 13252 / RB50) (Alcaligenes bronchisepticus).